The sequence spans 453 residues: tRNA modification GTPase MnmE (453 aa).

(6S)-5-formyl-5,6,7,8-tetrahydrofolate is bound by residues R22, E79, and K119. The region spanning 215–376 is the TrmE-type G domain; it reads GMKVVIAGRP…LKQHLKSLMG (162 aa). N225 contributes to the K(+) binding site. Residues 225 to 230, 244 to 250, 269 to 272, and 334 to 337 contribute to the GTP site; these read NAGKSS, TEIAGTT, DTAG, and NKAD. Residue S229 participates in Mg(2+) binding. K(+) contacts are provided by T244, I246, and T249. A Mg(2+)-binding site is contributed by T250. (6S)-5-formyl-5,6,7,8-tetrahydrofolate is bound at residue K453.

Belongs to the TRAFAC class TrmE-Era-EngA-EngB-Septin-like GTPase superfamily. TrmE GTPase family. In terms of assembly, homodimer. Heterotetramer of two MnmE and two MnmG subunits. K(+) is required as a cofactor.

It is found in the cytoplasm. Exhibits a very high intrinsic GTPase hydrolysis rate. Involved in the addition of a carboxymethylaminomethyl (cmnm) group at the wobble position (U34) of certain tRNAs, forming tRNA-cmnm(5)s(2)U34. This is tRNA modification GTPase MnmE from Shewanella oneidensis (strain ATCC 700550 / JCM 31522 / CIP 106686 / LMG 19005 / NCIMB 14063 / MR-1).